A 702-amino-acid chain; its full sequence is Polyribonucleotide nucleotidyltransferase (702 aa).

D485 and D491 together coordinate Mg(2+). A KH domain is found at 552-612 (PRTEIICIDP…EGVKKAISII (61 aa)). In terms of domain architecture, S1 motif spans 622-690 (GEIYLGKVTK…NQGRINLSRK (69 aa)).

This sequence belongs to the polyribonucleotide nucleotidyltransferase family. It depends on Mg(2+) as a cofactor.

The protein resides in the cytoplasm. The catalysed reaction is RNA(n+1) + phosphate = RNA(n) + a ribonucleoside 5'-diphosphate. Involved in mRNA degradation. Catalyzes the phosphorolysis of single-stranded polyribonucleotides processively in the 3'- to 5'-direction. The chain is Polyribonucleotide nucleotidyltransferase from Clostridium botulinum (strain Langeland / NCTC 10281 / Type F).